Consider the following 459-residue polypeptide: Bifunctional protein GlmU (459 aa).

A pyrophosphorylase region spans residues 1–229; that stretch reads MSNFAIILAA…FDESLGVNDR (229 aa). Residues 8–11, lysine 22, glutamine 72, and 77–78 each bind UDP-N-acetyl-alpha-D-glucosamine; these read LAAG and GT. Mg(2+) is bound at residue aspartate 102. Positions 139, 154, 169, and 227 each coordinate UDP-N-acetyl-alpha-D-glucosamine. Residue asparagine 227 coordinates Mg(2+). The interval 230–250 is linker; that stretch reads VALATAESVMRRRINHKHMVN. The N-acetyltransferase stretch occupies residues 251–459; the sequence is GVSFVNPEAT…TRLPHHPKNQ (209 aa). Positions 332 and 350 each coordinate UDP-N-acetyl-alpha-D-glucosamine. The Proton acceptor role is filled by histidine 362. Positions 365 and 376 each coordinate UDP-N-acetyl-alpha-D-glucosamine. Acetyl-CoA-binding positions include alanine 379, 385 to 386, serine 404, alanine 422, and arginine 439; that span reads NY.

The protein in the N-terminal section; belongs to the N-acetylglucosamine-1-phosphate uridyltransferase family. This sequence in the C-terminal section; belongs to the transferase hexapeptide repeat family. As to quaternary structure, homotrimer. Mg(2+) is required as a cofactor.

Its subcellular location is the cytoplasm. The enzyme catalyses alpha-D-glucosamine 1-phosphate + acetyl-CoA = N-acetyl-alpha-D-glucosamine 1-phosphate + CoA + H(+). It carries out the reaction N-acetyl-alpha-D-glucosamine 1-phosphate + UTP + H(+) = UDP-N-acetyl-alpha-D-glucosamine + diphosphate. The protein operates within nucleotide-sugar biosynthesis; UDP-N-acetyl-alpha-D-glucosamine biosynthesis; N-acetyl-alpha-D-glucosamine 1-phosphate from alpha-D-glucosamine 6-phosphate (route II): step 2/2. It participates in nucleotide-sugar biosynthesis; UDP-N-acetyl-alpha-D-glucosamine biosynthesis; UDP-N-acetyl-alpha-D-glucosamine from N-acetyl-alpha-D-glucosamine 1-phosphate: step 1/1. Its pathway is bacterial outer membrane biogenesis; LPS lipid A biosynthesis. Functionally, catalyzes the last two sequential reactions in the de novo biosynthetic pathway for UDP-N-acetylglucosamine (UDP-GlcNAc). The C-terminal domain catalyzes the transfer of acetyl group from acetyl coenzyme A to glucosamine-1-phosphate (GlcN-1-P) to produce N-acetylglucosamine-1-phosphate (GlcNAc-1-P), which is converted into UDP-GlcNAc by the transfer of uridine 5-monophosphate (from uridine 5-triphosphate), a reaction catalyzed by the N-terminal domain. This chain is Bifunctional protein GlmU, found in Streptococcus pneumoniae serotype 2 (strain D39 / NCTC 7466).